Here is a 499-residue protein sequence, read N- to C-terminus: MALPTLSAHWPSRVRTLEQQLVRQREQEARLRRQWEQHSQYFREQDVRSSKQAQWSSRQSFHRSMSAFQRDRMREEKQRKLEERRERLRTMLQEERDQLEAELRNIHPDRDTLARQLVEKTDALRSAREERRKNLAQELLREHWKQNNSQLRKVESELHKDHIVSQWQVQQQEKKQADERTQEEKQRFENEYERTRQEALERMRKEEENRKWEEKKRAEELLKQMEELKLREQEAERLKQEQETLMSKRWELEKLEDERKMMEESRRKTEFGRFLTRQYRAQLKRRAQQVQEELEADRKILAALLEGELDEQRFHKARRERAVADAAWMKRVIEEQLQLEREREAEFDILYREEAQRVWEKREAEWEKERRARERLMREVLAGRQQQLQERMQENRLAREESLQRREELLQQLEQDRLTLRLEKEQQEGLRTARIQEIDNQVEQRRKEQWEQQQTLEQEEAQEREELRLQEEELRLETDRMIRQGFQERIHSRPRSAWT.

A coiled-coil region spans residues 12-38 (SRVRTLEQQLVRQREQEARLRRQWEQH). Disordered stretches follow at residues 46–78 (DVRS…EEKQ) and 169–209 (VQQQ…EEEN). Residues 50–67 (SKQAQWSSRQSFHRSMSA) show a composition bias toward polar residues. 2 stretches are compositionally biased toward basic and acidic residues: residues 69 to 78 (QRDRMREEKQ) and 172 to 209 (QEKK…EEEN). Coiled coils occupy residues 71 to 133 (DRMR…ERRK), 168 to 306 (QVQQ…ALLE), and 359 to 484 (WEKR…MIRQ). The interaction with keratin proteins stretch occupies residues 74–499 (REEKQRKLEE…IHSRPRSAWT (426 aa)). The trichohyalin/plectin homology domain stretch occupies residues 260–426 (KMMEESRRKT…RLTLRLEKEQ (167 aa)).

This sequence belongs to the TCHP family.

Its subcellular location is the cytoplasm. It is found in the cytoskeleton. The protein localises to the microtubule organizing center. The protein resides in the centrosome. In terms of biological role, may act as a 'capping' or 'branching' protein for keratin filaments in the cell periphery. May regulate K8/K18 filament and desmosome organization mainly at the apical or peripheral regions of simple epithelial cells. The sequence is that of Trichoplein keratin filament-binding protein from Danio rerio (Zebrafish).